A 639-amino-acid polypeptide reads, in one-letter code: Developmental regulatory protein wetA (639 aa).

4 disordered regions span residues 65–97, 206–369, 418–552, and 587–613; these read MDPSHHHHHPHHHAHGESSTTSSGVSNADEFDF, TTMR…SAAS, GLLI…SADE, and LMTGVAPSGSSKTKARREKEAQERRRR. Basic residues predominate over residues 69–78; it reads HHHHHPHHHA. Composition is skewed to polar residues over residues 81–90 and 214–226; these read ESSTTSSGVS and VSQTLQRAVSPSM. The span at 246 to 255 shows a compositional bias: basic residues; the sequence is RGRRAHRAHT. Low complexity-rich tracts occupy residues 256 to 275, 346 to 369, and 506 to 526; these read QHALQHQQQQHQHQQQQAHQ, QQQWQQQQQQQHNGAQQHQWSAAS, and HSSGGSAASSSQRSASGRVSV.

It belongs to the wetA family.

In terms of biological role, brlA, abaA and wetA are pivotal regulators of conidiophore development and conidium maturation. They act individually and together to regulate their own expression and that of numerous other sporulation-specific genes. Acts as a crucial regulator of both conidiation capacity and conidial quality. Plays a role in virulence. The sequence is that of Developmental regulatory protein wetA from Beauveria bassiana (strain ARSEF 2860) (White muscardine disease fungus).